The chain runs to 378 residues: Histidinol-phosphate aminotransferase 2 (378 aa).

An N6-(pyridoxal phosphate)lysine modification is found at lysine 240.

This sequence belongs to the class-II pyridoxal-phosphate-dependent aminotransferase family. Histidinol-phosphate aminotransferase subfamily. As to quaternary structure, homodimer. Pyridoxal 5'-phosphate serves as cofactor.

The catalysed reaction is L-histidinol phosphate + 2-oxoglutarate = 3-(imidazol-4-yl)-2-oxopropyl phosphate + L-glutamate. It functions in the pathway amino-acid biosynthesis; L-histidine biosynthesis; L-histidine from 5-phospho-alpha-D-ribose 1-diphosphate: step 7/9. The polypeptide is Histidinol-phosphate aminotransferase 2 (hisC2) (Caulobacter vibrioides (strain ATCC 19089 / CIP 103742 / CB 15) (Caulobacter crescentus)).